The primary structure comprises 249 residues: MRRKIIAGNWKMNGDQDLVRRVAERAADSAGDAELAVCPPYPLLAAAASQLPFGVALGAQDVSEYDSGAYTGEVSASMLLEAGCRYVIVGHSERRTLYGEDNGRVAGKFVAARNAGLTPILCVGETLAERDAERTESVVGEQLDAVMDAVGGATFQGAVIAYEPVWAIGTGRTATPEQAQAVHAFIRQRVQERDAGEIADQLPILYGGSMKADNAAELLAQPDIDGGLIGGASLDPDSFLSIYNAAAEG.

Residue 9–11 (NWK) coordinates substrate. His-91 functions as the Electrophile in the catalytic mechanism. Glu-163 (proton acceptor) is an active-site residue. Substrate is bound by residues Gly-169, Ser-209, and 230 to 231 (GG).

Belongs to the triosephosphate isomerase family. Homodimer.

It is found in the cytoplasm. It catalyses the reaction D-glyceraldehyde 3-phosphate = dihydroxyacetone phosphate. It participates in carbohydrate biosynthesis; gluconeogenesis. The protein operates within carbohydrate degradation; glycolysis; D-glyceraldehyde 3-phosphate from glycerone phosphate: step 1/1. Its function is as follows. Involved in the gluconeogenesis. Catalyzes stereospecifically the conversion of dihydroxyacetone phosphate (DHAP) to D-glyceraldehyde-3-phosphate (G3P). In Halorhodospira halophila (strain DSM 244 / SL1) (Ectothiorhodospira halophila (strain DSM 244 / SL1)), this protein is Triosephosphate isomerase.